A 152-amino-acid polypeptide reads, in one-letter code: Transcriptional regulator MraZ (152 aa).

SpoVT-AbrB domains are found at residues 5-52 and 81-124; these read ATQI…TLSE and ASEC…DEQA.

This sequence belongs to the MraZ family. Forms oligomers.

The protein resides in the cytoplasm. The protein localises to the nucleoid. Functionally, negatively regulates its own expression and that of the subsequent genes in the proximal part of the division and cell wall (dcw) gene cluster. Acts by binding directly to DNA. May also regulate the expression of genes outside the dcw cluster. This is Transcriptional regulator MraZ from Photorhabdus laumondii subsp. laumondii (strain DSM 15139 / CIP 105565 / TT01) (Photorhabdus luminescens subsp. laumondii).